The following is a 446-amino-acid chain: tRNA(Ile2) 2-agmatinylcytidine synthetase TiaS (446 aa).

It belongs to the TiaS family.

It localises to the cytoplasm. It carries out the reaction cytidine(34) in tRNA(Ile2) + agmatine + ATP + H2O = 2-agmatinylcytidine(34) in tRNA(Ile2) + AMP + 2 phosphate + 2 H(+). Functionally, ATP-dependent agmatine transferase that catalyzes the formation of 2-agmatinylcytidine (agm2C) at the wobble position (C34) of tRNA(Ile2), converting the codon specificity from AUG to AUA. The chain is tRNA(Ile2) 2-agmatinylcytidine synthetase TiaS from Cenarchaeum symbiosum (strain A).